The primary structure comprises 399 residues: Sperm equatorial segment protein 1 (399 aa).

The signal sequence occupies residues 1–18 (MKLVVLVALWLWPSSLLA). Asn128 carries an N-linked (GlcNAc...) asparagine glycan. Over residues 136-145 (EEPFIEKEPE) the composition is skewed to basic and acidic residues. The tract at residues 136-250 (EEPFIEKEPE…PSAEDLPGRH (115 aa)) is disordered. The segment covering 157–167 (PEPELEPEPEP) has biased composition (acidic residues). A compositionally biased stretch (polar residues) spans 182 to 206 (VTSTTPNKELTGTSRISSMATQPAN). Over residues 207 to 225 (TQATRITVTVKTTSTMDVS) the composition is skewed to low complexity.

The protein belongs to the SPESP1 family. Glycosylated. In testis there are two predominant forms of 77- and 67-kDa and a form of 47-kDa, whereas in epididymal sperm from caput, corpus, and cauda there are two forms of 47- and 43-kDa. Testis forms contain complex carbohydrate residues. Epididymal sperm forms are N-glycosylated. Then undergoes significant glycosylation in the testis and that the majority of these glycoconjugates are removed by the time sperm reach the caput epididymis. In terms of tissue distribution, testis specific.

The protein localises to the cytoplasmic vesicle. Its subcellular location is the secretory vesicle. It localises to the acrosome. Involved in fertilization ability of sperm. The chain is Sperm equatorial segment protein 1 from Mus musculus (Mouse).